The primary structure comprises 767 residues: 5-methyltetrahydropteroyltriglutamate--homocysteine methyltransferase (767 aa).

2 residues coordinate 5-methyltetrahydropteroyltri-L-glutamate: lysine 19 and asparagine 126. Residues 446-448 and glutamate 499 contribute to the L-homocysteine site; that span reads IGS. L-methionine-binding positions include 446-448 and glutamate 499; that span reads IGS. Residues aspartate 504, tyrosine 527, 530–531, and tryptophan 576 each bind 5-methyltetrahydropteroyltri-L-glutamate; that span reads RY. Residue aspartate 614 coordinates L-homocysteine. Aspartate 614 is a binding site for L-methionine. Residues histidine 657, cysteine 659, and glutamate 679 each contribute to the Zn(2+) site. Histidine 707 acts as the Proton donor in catalysis. Cysteine 739 lines the Zn(2+) pocket.

The protein belongs to the vitamin-B12 independent methionine synthase family. Zn(2+) is required as a cofactor.

It carries out the reaction 5-methyltetrahydropteroyltri-L-glutamate + L-homocysteine = tetrahydropteroyltri-L-glutamate + L-methionine. Its pathway is amino-acid biosynthesis; L-methionine biosynthesis via de novo pathway; L-methionine from L-homocysteine (MetE route): step 1/1. Its activity is regulated as follows. Inhibited weakly by methotrexate. In terms of biological role, catalyzes the transfer of a methyl group from 5-methyltetrahydrofolate to homocysteine resulting in methionine formation. The sequence is that of 5-methyltetrahydropteroyltriglutamate--homocysteine methyltransferase from Candida albicans (strain SC5314 / ATCC MYA-2876) (Yeast).